Consider the following 175-residue polypeptide: 3-hydroxydecanoyl-[acyl-carrier-protein] dehydratase (175 aa).

His71 is a catalytic residue.

Belongs to the thioester dehydratase family. FabA subfamily. Homodimer.

It localises to the cytoplasm. It carries out the reaction a (3R)-hydroxyacyl-[ACP] = a (2E)-enoyl-[ACP] + H2O. It catalyses the reaction (3R)-hydroxydecanoyl-[ACP] = (2E)-decenoyl-[ACP] + H2O. The catalysed reaction is (2E)-decenoyl-[ACP] = (3Z)-decenoyl-[ACP]. The protein operates within lipid metabolism; fatty acid biosynthesis. In terms of biological role, necessary for the introduction of cis unsaturation into fatty acids. Catalyzes the dehydration of (3R)-3-hydroxydecanoyl-ACP to E-(2)-decenoyl-ACP and then its isomerization to Z-(3)-decenoyl-ACP. Can catalyze the dehydratase reaction for beta-hydroxyacyl-ACPs with saturated chain lengths up to 16:0, being most active on intermediate chain length. The protein is 3-hydroxydecanoyl-[acyl-carrier-protein] dehydratase of Rhodopseudomonas palustris (strain BisB5).